The primary structure comprises 193 residues: Interleukin-23 subunit alpha (193 aa).

The signal sequence occupies residues 1-22; sequence MLGSRAVMLMLLLLLLPWTSQG.

It belongs to the IL-6 superfamily. As to quaternary structure, heterodimer with IL12B; disulfide-linked. The heterodimer is known as interleukin IL-23. Interacts with IL23R; this interaction enables recruitment of IL12RB1.

It is found in the secreted. Its function is as follows. Associates with IL12B to form the pro-inflammatory cytokine IL-23 that plays different roles in innate and adaptive immunity. Released by antigen-presenting cells such as dendritic cells or macrophages, binds to a heterodimeric receptor complex composed of IL12RB1 and IL23R to activate JAK2 and TYK2 which then phosphorylate the receptor to form a docking site leading to the phosphorylation of STAT3 and STAT4. This process leads to activation of several pathways including p38 MAPK or NF-kappa-B and promotes the production of pro-inflammatory cytokines such as interleukin-17A/IL17A. In turn, participates in the early and effective intracellular bacterial clearance. Promotes the expansion and survival of T-helper 17 cells, a CD4-positive helper T-cell subset that produces IL-17, as well as other IL-17-producing cells. The chain is Interleukin-23 subunit alpha (IL23A) from Sus scrofa (Pig).